The sequence spans 106 residues: UPF0060 membrane protein Smed_0659 (106 aa).

A run of 3 helical transmembrane segments spans residues 4–24, 31–51, and 61–81; these read FAIYFLAALAEIAGCFTFWAW, GLWLLPGMASLAIFAWLLTMV, and AAYGGIYIIASLCWLWVAEGA.

It belongs to the UPF0060 family.

Its subcellular location is the cell inner membrane. This is UPF0060 membrane protein Smed_0659 from Sinorhizobium medicae (strain WSM419) (Ensifer medicae).